Reading from the N-terminus, the 948-residue chain is ATPase 8, plasma membrane-type (948 aa).

Topologically, residues methionine 1–phenylalanine 64 are cytoplasmic. Residues leucine 65–isoleucine 84 traverse the membrane as a helical segment. Over valine 85–tryptophan 96 the chain is Extracellular. The chain crosses the membrane as a helical span at residues glutamine 97–glutamate 117. At asparagine 118–isoleucine 246 the chain is on the cytoplasmic side. A helical membrane pass occupies residues glycine 247–proline 267. Over isoleucine 268–glycine 276 the chain is Extracellular. A helical transmembrane segment spans residues isoleucine 277–threonine 294. At valine 295–lysine 646 the chain is on the cytoplasmic side. Residue aspartate 332 is the 4-aspartylphosphate intermediate of the active site. Aspartate 591 and aspartate 595 together coordinate Mg(2+). Residues asparagine 647–leucine 668 traverse the membrane as a helical segment. Topologically, residues isoleucine 669 to aspartate 673 are extracellular. The helical transmembrane segment at phenylalanine 674–aspartate 696 threads the bilayer. Residues arginine 697–isoleucine 712 are Cytoplasmic-facing. Residues phenylalanine 713 to leucine 733 traverse the membrane as a helical segment. The Extracellular portion of the chain corresponds to alanine 734–glutamate 754. A helical transmembrane segment spans residues glutamate 755 to threonine 775. At arginine 776–glycine 787 the chain is on the cytoplasmic side. Residues phenylalanine 788 to alanine 808 traverse the membrane as a helical segment. Topologically, residues asparagine 809–valine 816 are extracellular. The chain crosses the membrane as a helical span at residues glycine 817–leucine 837. At aspartate 838 to valine 948 the chain is on the cytoplasmic side. Threonine 884 is subject to Phosphothreonine. Residue serine 930 is modified to Phosphoserine. The tract at residues tyrosine 946–valine 948 is interaction with 14-3-3 proteins. Threonine 947 carries the post-translational modification Phosphothreonine.

This sequence belongs to the cation transport ATPase (P-type) (TC 3.A.3) family. Type IIIA subfamily. As to quaternary structure, binds to 14-3-3 proteins. The binding is induced by phosphorylation of Thr-947. Binding to 14-3-3 proteins activates the H(+)-ATPase. In terms of tissue distribution, expressed in guard cells, roots and leaves, and barely in mesophyll cells.

The protein localises to the membrane. It catalyses the reaction ATP + H2O + H(+)(in) = ADP + phosphate + 2 H(+)(out). In terms of biological role, the plasma membrane H(+) ATPase of plants and fungi generates a proton gradient that drives the active transport of nutrients by H(+)-symport. The resulting external acidification and/or internal alkinization may mediate growth responses. This Arabidopsis thaliana (Mouse-ear cress) protein is ATPase 8, plasma membrane-type (AHA8).